We begin with the raw amino-acid sequence, 212 residues long: Uracil phosphoribosyltransferase (212 aa).

5-phospho-alpha-D-ribose 1-diphosphate-binding positions include Arg78, Arg103, and 130–138; that span reads DPMLATGSS. Uracil contacts are provided by residues Ile193 and 198-200; that span reads GDA. Asp199 is a 5-phospho-alpha-D-ribose 1-diphosphate binding site.

This sequence belongs to the UPRTase family. The cofactor is Mg(2+).

It carries out the reaction UMP + diphosphate = 5-phospho-alpha-D-ribose 1-diphosphate + uracil. It functions in the pathway pyrimidine metabolism; UMP biosynthesis via salvage pathway; UMP from uracil: step 1/1. With respect to regulation, allosterically activated by GTP. Functionally, catalyzes the conversion of uracil and 5-phospho-alpha-D-ribose 1-diphosphate (PRPP) to UMP and diphosphate. This is Uracil phosphoribosyltransferase from Pseudomonas syringae pv. tomato (strain ATCC BAA-871 / DC3000).